The primary structure comprises 503 residues: DnaJ homolog subfamily C member 3 (503 aa).

Residues 1–31 (MVSAAASAGRLGSALPFLLVLLDLQYQGAEC) form the signal peptide. TPR repeat units lie at residues 37–70 (VEKQ…DSDN), 71–104 (YIAY…KQDF), 105–137 (TSRL…NPSN), 153–186 (LQRL…CVWD), 187–220 (AELR…KSDN), 221–254 (TEAF…DQDH), 267–300 (LNKQ…EPDV), 305–338 (TRAK…EPTN), and 339–372 (VNAL…SEND). An intrachain disulfide couples cysteine 247 to cysteine 257. A disulfide bridge links cysteine 312 with cysteine 328. Residues 374–392 (QIREGLERAQRMLKQSQKR) are flexible linker. The 69-residue stretch at 393–461 (DYYKILGVKR…EMRRKFDAGE (69 aa)) folds into the J domain.

Its subcellular location is the endoplasmic reticulum. Functionally, may be involved in the unfolded protein response (UPR) during ER stress. The sequence is that of DnaJ homolog subfamily C member 3 (DNAJC3) from Gallus gallus (Chicken).